The sequence spans 372 residues: MNTGLDLEYSFNEILKGFGLSSEIAHIIWLPLPMLIVLVSAVVGVLVTVWLERKISAAAQQRIGPEYAGALGVLQPIADGLKLLVKEDIIPAKADSILFTTGPILVLVPVILSWLIVPFGQNLLISNVGIGIFLWIALSSIQPIGLLMSGYASNNKYSLLGGLRAAAQSISYEIPLALSVLAVVLMTNSLSTIDIVNQQSGAGILSWNIWRQPVGFIIFWICALAECERLPFDLPEAEEELVAGYQTEYAGMKFALFYLGSYINLILSALLVSILYLGGWGFPIPVEIIAKVLNLPINAPVIQVFTASIGIIMTVLKAYLLVFIAILLRWTTPRVRIDQLLDLGWKFLLPISLANLLLTAGLKLALPQFFGG.

Transmembrane regions (helical) follow at residues 27 to 47 (IIWLPLPMLIVLVSAVVGVLV), 97 to 117 (ILFTTGPILVLVPVILSWLIV), 128 to 148 (VGIGIFLWIALSSIQPIGLLM), 176 to 196 (LALSVLAVVLMTNSLSTIDIV), 204 to 224 (ILSWNIWRQPVGFIIFWICAL), 266 to 286 (ILSALLVSILYLGGWGFPIPV), 308 to 328 (SIGIIMTVLKAYLLVFIAILL), and 347 to 367 (FLLPISLANLLLTAGLKLALP).

It belongs to the complex I subunit 1 family. In terms of assembly, NDH-1 is composed of at least 11 different subunits.

The protein localises to the cellular thylakoid membrane. It carries out the reaction a plastoquinone + NADH + (n+1) H(+)(in) = a plastoquinol + NAD(+) + n H(+)(out). The enzyme catalyses a plastoquinone + NADPH + (n+1) H(+)(in) = a plastoquinol + NADP(+) + n H(+)(out). NDH-1 shuttles electrons from an unknown electron donor, via FMN and iron-sulfur (Fe-S) centers, to quinones in the respiratory and/or the photosynthetic chain. The immediate electron acceptor for the enzyme in this species is believed to be plastoquinone. Couples the redox reaction to proton translocation, and thus conserves the redox energy in a proton gradient. The protein is NAD(P)H-quinone oxidoreductase subunit 1 of Prochlorococcus marinus (strain MIT 9515).